Here is a 56-residue protein sequence, read N- to C-terminus: MYLFRRTSKAVKRKRRTHFKLSVPGMVECPSCGEAKLAHRVCKACGTYKGKEVISK.

Belongs to the bacterial ribosomal protein bL32 family.

The sequence is that of Large ribosomal subunit protein bL32 from Bacillus cereus (strain ATCC 14579 / DSM 31 / CCUG 7414 / JCM 2152 / NBRC 15305 / NCIMB 9373 / NCTC 2599 / NRRL B-3711).